The following is a 320-amino-acid chain: Eukaryotic translation initiation factor 3 subunit G (320 aa).

The tract at residues 1–59 (MPTGDFDSKPSWADQVEEEGEDDKCVTSELLKGIPLATGDTSPEPELLPGAPLPPPKEV) is disordered. Residues serine 8 and serine 11 each carry the phosphoserine modification. 2 positions are modified to phosphothreonine: threonine 38 and threonine 41. Phosphoserine occurs at positions 42, 189, 223, and 264. The disordered stretch occupies residues 209–234 (KTGKYVPPSLRDGASRRGESMQPNRR). Basic and acidic residues predominate over residues 221 to 234 (GASRRGESMQPNRR). An RRM domain is found at 239-317 (ATIRVTNLSE…LILNVEWAKP (79 aa)).

Component of the eukaryotic translation initiation factor 3 (eIF-3) complex, which is composed of 13 subunits: EIF3A, EIF3B, EIF3C, EIF3D, EIF3E, EIF3F, EIF3G, EIF3H, EIF3I, EIF3J, EIF3K, EIF3L and EIF3M. The eIF-3 complex appears to include 3 stable modules: module A is composed of EIF3A, EIF3B, EIF3G and EIF3I; module B is composed of EIF3F, EIF3H, and EIF3M; and module C is composed of EIF3C, EIF3D, EIF3E, EIF3K and EIF3L. EIF3C of module C binds EIF3B of module A and EIF3H of module B, thereby linking the three modules. EIF3J is a labile subunit that binds to the eIF-3 complex via EIF3B. The eIF-3 complex interacts with RPS6KB1 under conditions of nutrient depletion. Mitogenic stimulation leads to binding and activation of a complex composed of MTOR and RPTOR, leading to phosphorylation and release of RPS6KB1 and binding of EIF4B to eIF-3. Interacts (via C-terminus) with AIFM1 (via N-terminus). Interacts with DHX33; the interaction is independent of RNA. Phosphorylated. Phosphorylation is enhanced upon serum stimulation.

The protein resides in the cytoplasm. It localises to the nucleus. The protein localises to the perinuclear region. RNA-binding component of the eukaryotic translation initiation factor 3 (eIF-3) complex, which is required for several steps in the initiation of protein synthesis. The eIF-3 complex associates with the 40S ribosome and facilitates the recruitment of eIF-1, eIF-1A, eIF-2:GTP:methionyl-tRNAi and eIF-5 to form the 43S pre-initiation complex (43S PIC). The eIF-3 complex stimulates mRNA recruitment to the 43S PIC and scanning of the mRNA for AUG recognition. The eIF-3 complex is also required for disassembly and recycling of post-termination ribosomal complexes and subsequently prevents premature joining of the 40S and 60S ribosomal subunits prior to initiation. The eIF-3 complex specifically targets and initiates translation of a subset of mRNAs involved in cell proliferation, including cell cycling, differentiation and apoptosis, and uses different modes of RNA stem-loop binding to exert either translational activation or repression. This subunit can bind 18S rRNA. Functionally, (Microbial infection) In case of FCV infection, plays a role in the ribosomal termination-reinitiation event leading to the translation of VP2. The chain is Eukaryotic translation initiation factor 3 subunit G from Homo sapiens (Human).